A 72-amino-acid chain; its full sequence is Excisionase (72 aa).

As to quaternary structure, interacts (via C-terminus) with the integrase (via N-terminus). Part of the excision complex made of the integrase tetramer, IHF, Fis and Xis.

Part of the excision complex necessary for the excision of prophage from the host genome by site-specific recombination at the att site. The chain is Excisionase (xis) from Escherichia phage lambda (Bacteriophage lambda).